Consider the following 543-residue polypeptide: Acrosin-binding protein (543 aa).

An N-terminal signal peptide occupies residues 1–25 (MRKPAAGFLPSLLKVLLLPLAPAAA). The interval 26–106 (QDSTQASTPG…ASWFESFCQF (81 aa)) is pro-ACR binding. A propeptide spans 26–273 (QDSTQASTPG…NPSSFAPRVR (248 aa)) (removed in mature form). The interval 185–272 (SLGGQEQAPE…SNPSSFAPRV (88 aa)) is disordered. Residues 192-220 (APEHKQEQGVEHRQEPTQEHKQEEGQKQE) are compositionally biased toward basic and acidic residues. Positions 221-231 (EQEEEQEEEGK) are enriched in acidic residues. Over residues 232–243 (QEEGQGTKEGRE) the composition is skewed to basic and acidic residues. Positions 319–427 (LPHTEALLVL…NQVGSPESGR (109 aa)) are pro-ACR binding.

Binds proacrosin (pro-ACR). Does not bind the mature form of ACR. In terms of processing, phosphorylated on Tyr residues in capacitated sperm. The N-terminus is blocked. Post-translationally, synthesized as a 60-kDa precursor, the 32-kDa mature form is post-translationally produced by the removal of the N-terminal half of the precursor during sperm maturation in the testis and/or epididymis. As to expression, expression restricted to testis in normal tissue. Expressed in a wide spectrum of cancers, including bladder, breast, liver, lung and colon cancers.

It is found in the secreted. Its subcellular location is the cytoplasmic vesicle. The protein resides in the secretory vesicle. It localises to the acrosome. Its function is as follows. Acrosomal protein that maintains proacrosin (pro-ACR) as an enzymatically inactive zymogen in the acrosome. Involved also in the acrosome formation. This is Acrosin-binding protein from Homo sapiens (Human).